The primary structure comprises 223 residues: Endonuclease V (223 aa).

Asp35 and Asp103 together coordinate Mg(2+).

It belongs to the endonuclease V family. Requires Mg(2+) as cofactor.

Its subcellular location is the cytoplasm. It catalyses the reaction Endonucleolytic cleavage at apurinic or apyrimidinic sites to products with a 5'-phosphate.. In terms of biological role, DNA repair enzyme involved in the repair of deaminated bases. Selectively cleaves double-stranded DNA at the second phosphodiester bond 3' to a deoxyinosine leaving behind the intact lesion on the nicked DNA. This is Endonuclease V from Shigella flexneri serotype 5b (strain 8401).